The chain runs to 480 residues: Adenosylhomocysteinase (480 aa).

Substrate contacts are provided by threonine 63, aspartate 142, and glutamate 203. 204–206 (TTT) serves as a coordination point for NAD(+). Residues lysine 233 and aspartate 237 each contribute to the substrate site. Residues asparagine 238, 267 to 272 (GYGDVG), glutamate 290, asparagine 325, 346 to 348 (IGH), and asparagine 394 contribute to the NAD(+) site.

This sequence belongs to the adenosylhomocysteinase family. The cofactor is NAD(+).

The protein resides in the cytoplasm. It carries out the reaction S-adenosyl-L-homocysteine + H2O = L-homocysteine + adenosine. Its pathway is amino-acid biosynthesis; L-homocysteine biosynthesis; L-homocysteine from S-adenosyl-L-homocysteine: step 1/1. In terms of biological role, may play a key role in the regulation of the intracellular concentration of adenosylhomocysteine. The sequence is that of Adenosylhomocysteinase from Xanthomonas euvesicatoria pv. vesicatoria (strain 85-10) (Xanthomonas campestris pv. vesicatoria).